We begin with the raw amino-acid sequence, 232 residues long: Large ribosomal subunit protein uL16m (232 aa).

A mitochondrion-targeting transit peptide spans 1–41 (MFPYLTRMNLSIKMGGLTLKESSPNAFLNNTTIARRFKHEY).

The protein belongs to the universal ribosomal protein uL16 family. In terms of assembly, component of the mitochondrial large ribosomal subunit (mt-LSU). Mature yeast 74S mitochondrial ribosomes consist of a small (37S) and a large (54S) subunit. The 37S small subunit contains a 15S ribosomal RNA (15S mt-rRNA) and 34 different proteins. The 54S large subunit contains a 21S rRNA (21S mt-rRNA) and 46 different proteins.

Its subcellular location is the mitochondrion. Component of the mitochondrial ribosome (mitoribosome), a dedicated translation machinery responsible for the synthesis of mitochondrial genome-encoded proteins, including at least some of the essential transmembrane subunits of the mitochondrial respiratory chain. The mitoribosomes are attached to the mitochondrial inner membrane and translation products are cotranslationally integrated into the membrane. The protein is Large ribosomal subunit protein uL16m (MRPL16) of Saccharomyces cerevisiae (strain ATCC 204508 / S288c) (Baker's yeast).